Reading from the N-terminus, the 464-residue chain is ATP synthase subunit beta (464 aa).

151-158 contributes to the ATP binding site; that stretch reads GGAGVGKT.

The protein belongs to the ATPase alpha/beta chains family. As to quaternary structure, F-type ATPases have 2 components, CF(1) - the catalytic core - and CF(0) - the membrane proton channel. CF(1) has five subunits: alpha(3), beta(3), gamma(1), delta(1), epsilon(1). CF(0) has three main subunits: a(1), b(2) and c(9-12). The alpha and beta chains form an alternating ring which encloses part of the gamma chain. CF(1) is attached to CF(0) by a central stalk formed by the gamma and epsilon chains, while a peripheral stalk is formed by the delta and b chains.

It is found in the cell membrane. It carries out the reaction ATP + H2O + 4 H(+)(in) = ADP + phosphate + 5 H(+)(out). Its function is as follows. Produces ATP from ADP in the presence of a proton gradient across the membrane. The catalytic sites are hosted primarily by the beta subunits. This Bacillus cytotoxicus (strain DSM 22905 / CIP 110041 / 391-98 / NVH 391-98) protein is ATP synthase subunit beta.